Reading from the N-terminus, the 913-residue chain is Probable TonB-dependent receptor HI_1217 (913 aa).

The signal sequence occupies residues 1–27 (MKKAIKLNLITLGLINTIGMTITQAQA). Residues 42–165 (SNDKKPFTEA…LAGSANFRTL (124 aa)) enclose the TBDR plug domain. Positions 176–913 (PFGIILKGMT…TYILSLNYKF (738 aa)) constitute a TBDR beta-barrel domain. A TonB C-terminal box motif is present at residues 896 to 913 (LYNFARGRTYILSLNYKF).

This sequence belongs to the TonB-dependent receptor family.

Its subcellular location is the cell outer membrane. Its function is as follows. Probable receptor, TonB-dependent. The protein is Probable TonB-dependent receptor HI_1217 of Haemophilus influenzae (strain ATCC 51907 / DSM 11121 / KW20 / Rd).